The sequence spans 284 residues: UPF0276 protein PA14_21580 (284 aa).

The protein belongs to the UPF0276 family.

This Pseudomonas aeruginosa (strain UCBPP-PA14) protein is UPF0276 protein PA14_21580.